The sequence spans 272 residues: Thymidine phosphorylase (272 aa).

This sequence belongs to the thymidine/pyrimidine-nucleoside phosphorylase family. Homodimer.

It catalyses the reaction thymidine + phosphate = 2-deoxy-alpha-D-ribose 1-phosphate + thymine. Functionally, the enzymes which catalyze the reversible phosphorolysis of pyrimidine nucleosides are involved in the degradation of these compounds and in their utilization as carbon and energy sources, or in the rescue of pyrimidine bases for nucleotide synthesis. The protein is Thymidine phosphorylase (deoA) of Metamycoplasma hominis (Mycoplasma hominis).